A 464-amino-acid polypeptide reads, in one-letter code: Anthocyanidin 3-O-galactosyltransferase 3GT1 (464 aa).

The an anthocyanidin site is built by S19 and H21. Residue H21 is the Proton acceptor of the active site. N-linked (GlcNAc...) asparagine glycosylation occurs at N38. Catalysis depends on D121, which acts as the Charge relay. Residue H152 coordinates an anthocyanidin. Positions 342, 344, 359, 362, 363, 364, and 367 each coordinate UDP-alpha-D-glucose. Residue G382 participates in an anthocyanidin binding. Residue D383 coordinates UDP-alpha-D-glucose.

The protein belongs to the UDP-glycosyltransferase family. As to quaternary structure, monomer. As to expression, mostly expressed in leaves and flowers and, to a lower extent, in roots. In flowers, mainly observed in petals, toruses and scapes, and at lower levels in pistils and stamens.

The enzyme catalyses cyanidin + UDP-alpha-D-galactose = cyanidin 3-O-beta-D-galactoside + UDP + H(+). It catalyses the reaction cyanidin + UDP-alpha-D-glucose = cyanidin 3-O-beta-D-glucoside + UDP + H(+). The catalysed reaction is delphinidin + UDP-alpha-D-glucose = delphinidin 3-O-beta-D-glucoside + UDP. It carries out the reaction malvidin + UDP-alpha-D-glucose = malvidin 3-O-beta-D-glucoside + UDP. The enzyme catalyses delphinidin + UDP-alpha-D-galactose = delphinidin 3-O-beta-D-galactoside + UDP + H(+). It catalyses the reaction pelargonidin + UDP-alpha-D-galactose = pelargonidin 3-O-beta-D-galactoside betaine + UDP. The catalysed reaction is peonidin + UDP-alpha-D-galactose = peonidin 3-O-beta-D-galactoside + UDP. It carries out the reaction malvidin + UDP-alpha-D-galactose = malvidin 3-O-beta-D-galactoside + UDP + H(+). The enzyme catalyses petunidin + UDP-alpha-D-galactose = petunidin 3-O-beta-D-galactoside + UDP. It catalyses the reaction an anthocyanidin + UDP-alpha-D-glucose + H(+) = an anthocyanidin 3-O-beta-D-glucoside + UDP. The catalysed reaction is an anthocyanidin + UDP-alpha-D-galactose = an anthocyanidin 3-O-beta-D-galactoside + UDP. It participates in pigment biosynthesis; anthocyanin biosynthesis. Its function is as follows. Flavonoid 3-O-glycosyltransferase involved in the biosynthesis of anthocyanins conferring flower red/pink colors, mainly anthocyanidin 3-O-glycosides. Catalyzes the addition of UDP-sugar to the 3-OH of anthocyanidin, with a preference for UDP-galactose (UDP-Gal) as sugar donor and cyanidin as substrate; able to use delphinidin, pelargonidin, peonidin, malvidin and petunidin as substrates in the presence of UDP-Gal. Can also use UDP-glucose (UDP-Glu) as sugar donor with delphinidin, cyanidin and malvidin as substrates, but not active on pelargonidin, peonidin and petunidin. The protein is Anthocyanidin 3-O-galactosyltransferase 3GT1 of Rhododendron delavayi (Rhododendron).